The chain runs to 308 residues: NAD kinase (308 aa).

The active-site Proton acceptor is Asp86. Residues Asp86–Gly87, Arg91, Asn160–Glu161, Asp190, and Thr201–Ser206 each bind NAD(+).

This sequence belongs to the NAD kinase family. It depends on a divalent metal cation as a cofactor.

The protein localises to the cytoplasm. It carries out the reaction NAD(+) + ATP = ADP + NADP(+) + H(+). In terms of biological role, involved in the regulation of the intracellular balance of NAD and NADP, and is a key enzyme in the biosynthesis of NADP. Catalyzes specifically the phosphorylation on 2'-hydroxyl of the adenosine moiety of NAD to yield NADP. The protein is NAD kinase of Mycolicibacterium paratuberculosis (strain ATCC BAA-968 / K-10) (Mycobacterium paratuberculosis).